The following is a 411-amino-acid chain: Epoxyqueuosine reductase (411 aa).

D171 serves as the catalytic Proton donor. Residues 213–245 (LPLPVDKPQEEQCGRCVACMTTCPTGAIVAPYT) form the 4Fe-4S ferredoxin-type domain. The [4Fe-4S] cluster site is built by C225, C228, C231, C235, C251, C278, C281, and C285.

It belongs to the QueG family. As to quaternary structure, monomer. Cob(II)alamin is required as a cofactor. It depends on [4Fe-4S] cluster as a cofactor.

The protein localises to the cytoplasm. It catalyses the reaction epoxyqueuosine(34) in tRNA + AH2 = queuosine(34) in tRNA + A + H2O. It functions in the pathway tRNA modification; tRNA-queuosine biosynthesis. Functionally, catalyzes the conversion of epoxyqueuosine (oQ) to queuosine (Q), which is a hypermodified base found in the wobble positions of tRNA(Asp), tRNA(Asn), tRNA(His) and tRNA(Tyr). This chain is Epoxyqueuosine reductase, found in Yersinia pestis.